Consider the following 298-residue polypeptide: ATP phosphoribosyltransferase (298 aa).

This sequence belongs to the ATP phosphoribosyltransferase family. Long subfamily. Mg(2+) serves as cofactor.

It is found in the cytoplasm. It carries out the reaction 1-(5-phospho-beta-D-ribosyl)-ATP + diphosphate = 5-phospho-alpha-D-ribose 1-diphosphate + ATP. Its pathway is amino-acid biosynthesis; L-histidine biosynthesis; L-histidine from 5-phospho-alpha-D-ribose 1-diphosphate: step 1/9. With respect to regulation, feedback inhibited by histidine. In terms of biological role, catalyzes the condensation of ATP and 5-phosphoribose 1-diphosphate to form N'-(5'-phosphoribosyl)-ATP (PR-ATP). Has a crucial role in the pathway because the rate of histidine biosynthesis seems to be controlled primarily by regulation of HisG enzymatic activity. The protein is ATP phosphoribosyltransferase of Tolumonas auensis (strain DSM 9187 / NBRC 110442 / TA 4).